The primary structure comprises 393 residues: MPKKKPTPIQLNPAPDGSAVNGTSSAETNLEALQKKLEELELDEQQRKRLEAFLTQKQKVGELKDDDFEKISELGAGNGGVVFKVSHKPSGLVMARKLIHLEIKPAIRNQIIRELQVLHECNSPYIVGFYGAFYSDGEISICMEHMDGGSLDQVLKKAGRIPEQILGKVSIAVIKGLTYLREKHKIMHRDVKPSNILVNSRGEIKLCDFGVSGQLIDSMANSFVGTRSYMSPERLQGTHYSVQSDIWSMGLSLVEMAVGRYPIPPPDAKELELLFGCHVEGDAAETPPRPRTPGRPLSSYGMDSRPPMAIFELLDYIVNEPPPKLPSGVFSLEFQDFVNKCLIKNPAERADLKQLMVHAFIKRSDAEEVDFAGWLCSTIGLNQPSTPTHAASI.

The tract at residues 1–27 is disordered; it reads MPKKKPTPIQLNPAPDGSAVNGTSSAE. One can recognise a Protein kinase domain in the interval 68 to 361; it reads FEKISELGAG…LKQLMVHAFI (294 aa). ATP is bound by residues 74-82 and Lys97; that span reads LGAGNGGVV. Asp190 (proton acceptor) is an active-site residue. A phosphoserine; by RAF mark is found at Ser218 and Ser222. The tract at residues 270–307 is RAF1-binding; sequence ELELLFGCHVEGDAAETPPRPRTPGRPLSSYGMDSRPP. Phosphothreonine is present on Thr286. The residue at position 292 (Thr292) is a Phosphothreonine; by MAPK1. The residue at position 298 (Ser298) is a Phosphoserine; by PAK.

Belongs to the protein kinase superfamily. STE Ser/Thr protein kinase family. MAP kinase kinase subfamily. In terms of assembly, found in a complex with at least BRAF, HRAS, MAP2K1, MAPK3/ERK1 and RGS14. Forms a heterodimer with MAP2K2/MEK2. Forms heterodimers with KSR2 which further dimerize to form tetramers. Interacts with KSR1 or KSR2 and BRAF; the interaction with KSR1 or KSR2 mediates KSR1-BRAF or KSR2-BRAF dimerization. Interacts with ARBB2, LAMTOR3, MAPK1/ERK2 and RAF1. Interacts with MAPK1/ERK2. Interacts with MORG1. Interacts with PPARG. Interacts with SGK1. Interacts with BIRC6/bruce. Interacts with KAT7; the interaction promotes KAT7 phosphorylation. Interacts with RAF1 and NEK10; the interaction is required for ERK1/2-signaling pathway activation in response to UV irradiation. Interacts with TRAF3IP3. Interacts with MOS. In terms of processing, phosphorylation at Ser-218 and Ser-222 by MAP kinase kinase kinases (BRAF or MEKK1) positively regulates kinase activity. Also phosphorylated at Thr-292 by MAPK1/ERK2 and at Ser-298 by PAK. MAPK1/ERK2 phosphorylation of Thr-292 occurs in response to cellular adhesion and leads to inhibition of Ser-298 phosphorylation by PAK. Autophosphorylated at Ser-218 and Ser-222, autophosphosphorylation is promoted by NEK10 following UV irradiation.

The protein localises to the cytoplasm. It localises to the cytoskeleton. The protein resides in the microtubule organizing center. Its subcellular location is the centrosome. It is found in the spindle pole body. The protein localises to the nucleus. It localises to the membrane. The enzyme catalyses L-seryl-[protein] + ATP = O-phospho-L-seryl-[protein] + ADP + H(+). It catalyses the reaction L-threonyl-[protein] + ATP = O-phospho-L-threonyl-[protein] + ADP + H(+). The catalysed reaction is L-tyrosyl-[protein] + ATP = O-phospho-L-tyrosyl-[protein] + ADP + H(+). With respect to regulation, ras proteins such as HRAS mediate the activation of RAF proteins such as RAF1 or BRAF which in turn activate extracellular signal-regulated kinases (ERK) through MAPK (mitogen-activated protein kinases) and ERK kinases MAP2K1/MEK1 and MAP2K2/MEK2. Activation occurs through phosphorylation of Ser-218 and Ser-222. MAP2K1/MEK1 binds KSR1 or KSR2 releasing the inhibitory intramolecular interaction between KSR1 or KSR2 protein kinase and N-terminal domains. This allows KSR1 or KSR2 dimerization with BRAF leading to BRAF activation and phosphorylation of MAP2K1. MAP2K1/MEK1 is also the target of negative feed-back regulation by its substrate kinases, such as MAPK1/ERK2. These phosphorylate MAP2K1/MEK1 on Thr-292, thereby facilitating dephosphorylation of the activating residues Ser-218 and Ser-222. Inhibited by serine/threonine phosphatase 2A. Dual specificity protein kinase which acts as an essential component of the MAP kinase signal transduction pathway. Binding of extracellular ligands such as growth factors, cytokines and hormones to their cell-surface receptors activates RAS and this initiates RAF1 activation. RAF1 then further activates the dual-specificity protein kinases MAP2K1/MEK1 and MAP2K2/MEK2. Both MAP2K1/MEK1 and MAP2K2/MEK2 function specifically in the MAPK/ERK cascade, and catalyze the concomitant phosphorylation of a threonine and a tyrosine residue in a Thr-Glu-Tyr sequence located in the extracellular signal-regulated kinases MAPK3/ERK1 and MAPK1/ERK2, leading to their activation and further transduction of the signal within the MAPK/ERK cascade. Activates BRAF in a KSR1 or KSR2-dependent manner; by binding to KSR1 or KSR2 releases the inhibitory intramolecular interaction between KSR1 or KSR2 protein kinase and N-terminal domains which promotes KSR1 or KSR2-BRAF dimerization and BRAF activation. Depending on the cellular context, this pathway mediates diverse biological functions such as cell growth, adhesion, survival and differentiation, predominantly through the regulation of transcription, metabolism and cytoskeletal rearrangements. One target of the MAPK/ERK cascade is peroxisome proliferator-activated receptor gamma (PPARG), a nuclear receptor that promotes differentiation and apoptosis. MAP2K1/MEK1 has been shown to export PPARG from the nucleus. The MAPK/ERK cascade is also involved in the regulation of endosomal dynamics, including lysosome processing and endosome cycling through the perinuclear recycling compartment (PNRC), as well as in the fragmentation of the Golgi apparatus during mitosis. This Mus musculus (Mouse) protein is Dual specificity mitogen-activated protein kinase kinase 1 (Map2k1).